We begin with the raw amino-acid sequence, 1556 residues long: Ras guanine nucleotide exchange factor G (1556 aa).

4 disordered regions span residues 19–63 (IGNI…KNRG), 93–141 (LQLN…SSTT), 163–239 (SHVT…LSPS), and 254–296 (ATDS…NNNS). Low complexity-rich tracts occupy residues 25–54 (NNNN…SGSN) and 96–141 (NDTD…SSTT). The segment covering 170-186 (DDDDDDESSSSEEDFDS) has biased composition (acidic residues). A compositionally biased stretch (low complexity) spans 196-216 (TSSTTATTTTTTTSVSPLTSS). Positions 256-271 (DSDNQSLEPCNNKTIV) are enriched in polar residues. The span at 279-295 (DNNNNHNNNNNNNNNNN) shows a compositional bias: low complexity. In terms of domain architecture, F-box 1 spans 307-353 (NKTFLDLDEKIYLKIFGYLFAEDLCSINRVSKHLCNIINNQQLWKDL). The disordered stretch occupies residues 385 to 416 (NNNNNNNNNNNNNNNNSNISNNNNNINNSNGN). The region spanning 679–726 (VFDISRVSDILLIKIFRNLDSIKDLSVCQRVSKRWNKAIAISSLWEQL) is the F-box 2 domain. Disordered stretches follow at residues 762 to 815 (QPSP…NGLN) and 827 to 1101 (GSNL…ITNN). Positions 827-848 (GSNLSNGGNSGSSFSPFNPLSG) are enriched in low complexity. Residues 849 to 866 (SNGGSSFGPFGSGGGGGS) show a composition bias toward gly residues. Low complexity-rich tracts occupy residues 867-880 (NSNI…LNSS) and 888-910 (FLAM…TIST). The segment covering 911–935 (NCTPTGGSTTNSPNFQSPMVSSSTV) has biased composition (polar residues). Low complexity-rich tracts occupy residues 943–957 (SPNL…ISLS) and 972–1053 (PDSS…IQPI). Residues 1059–1076 (VNNNGSQSDLSKISDLNA) are compositionally biased toward polar residues. Positions 1077–1101 (NPNTTTTTTTNTIESSSSSSSITNN) are enriched in low complexity. Residues 1116-1244 (MINVQKLMNL…LIRSFSRKLS (129 aa)) enclose the N-terminal Ras-GEF domain. The disordered stretch occupies residues 1254-1279 (IGITGGKSSRKGGGSGSGSGSGGGSG). Residues 1264–1279 (KGGGSGSGSGSGGGSG) are compositionally biased toward gly residues. One can recognise a Ras-GEF domain in the interval 1317-1548 (PAEEIAKQLT…YRVSMQREPR (232 aa)).

In terms of biological role, promotes the exchange of Ras-bound GDP by GTP. The sequence is that of Ras guanine nucleotide exchange factor G (gefG) from Dictyostelium discoideum (Social amoeba).